Here is a 143-residue protein sequence, read N- to C-terminus: ATP synthase subunit b', chloroplastic (143 aa).

A helical membrane pass occupies residues 12–31; it reads LPVMGLQVVLLSWLLEQILY.

The protein belongs to the ATPase B chain family. As to quaternary structure, F-type ATPases have 2 components, F(1) - the catalytic core - and F(0) - the membrane proton channel. F(1) has five subunits: alpha(3), beta(3), gamma(1), delta(1), epsilon(1). F(0) has four main subunits: a(1), b(1), b'(1) and c(10-14). The alpha and beta chains form an alternating ring which encloses part of the gamma chain. F(1) is attached to F(0) by a central stalk formed by the gamma and epsilon chains, while a peripheral stalk is formed by the delta, b and b' chains.

The protein localises to the plastid. It is found in the chloroplast thylakoid membrane. In terms of biological role, f(1)F(0) ATP synthase produces ATP from ADP in the presence of a proton or sodium gradient. F-type ATPases consist of two structural domains, F(1) containing the extramembraneous catalytic core and F(0) containing the membrane proton channel, linked together by a central stalk and a peripheral stalk. During catalysis, ATP synthesis in the catalytic domain of F(1) is coupled via a rotary mechanism of the central stalk subunits to proton translocation. Its function is as follows. Component of the F(0) channel, it forms part of the peripheral stalk, linking F(1) to F(0). The b'-subunit is a diverged and duplicated form of b found in plants and photosynthetic bacteria. This Cyanidioschyzon merolae (strain NIES-3377 / 10D) (Unicellular red alga) protein is ATP synthase subunit b', chloroplastic.